The following is a 144-amino-acid chain: Transcription antitermination protein NusB (144 aa).

This sequence belongs to the NusB family.

In terms of biological role, involved in transcription antitermination. Required for transcription of ribosomal RNA (rRNA) genes. Binds specifically to the boxA antiterminator sequence of the ribosomal RNA (rrn) operons. This is Transcription antitermination protein NusB from Leifsonia xyli subsp. xyli (strain CTCB07).